The primary structure comprises 914 residues: Isoleucine--tRNA ligase (914 aa).

Positions 64-74 match the 'HIGH' region motif; the sequence is PYANGNFHLGH. Glu557 serves as a coordination point for L-isoleucyl-5'-AMP. The 'KMSKS' region motif lies at 598–602; the sequence is AMSKS. Residue Lys601 coordinates ATP. Zn(2+)-binding residues include Cys889, Cys892, Cys906, and Cys909.

This sequence belongs to the class-I aminoacyl-tRNA synthetase family. IleS type 1 subfamily. As to quaternary structure, monomer. It depends on Zn(2+) as a cofactor.

It is found in the cytoplasm. It catalyses the reaction tRNA(Ile) + L-isoleucine + ATP = L-isoleucyl-tRNA(Ile) + AMP + diphosphate. Catalyzes the attachment of isoleucine to tRNA(Ile). As IleRS can inadvertently accommodate and process structurally similar amino acids such as valine, to avoid such errors it has two additional distinct tRNA(Ile)-dependent editing activities. One activity is designated as 'pretransfer' editing and involves the hydrolysis of activated Val-AMP. The other activity is designated 'posttransfer' editing and involves deacylation of mischarged Val-tRNA(Ile). In Leptospira borgpetersenii serovar Hardjo-bovis (strain JB197), this protein is Isoleucine--tRNA ligase.